A 245-amino-acid polypeptide reads, in one-letter code: Orotidine 5'-phosphate decarboxylase (245 aa).

Substrate contacts are provided by residues Asp-22, Lys-44, 71-80, Thr-131, Arg-192, Gln-201, Gly-221, and Arg-222; that span reads DLKFHDIPNT. The Proton donor role is filled by Lys-73.

It belongs to the OMP decarboxylase family. Type 1 subfamily. As to quaternary structure, homodimer.

The catalysed reaction is orotidine 5'-phosphate + H(+) = UMP + CO2. The protein operates within pyrimidine metabolism; UMP biosynthesis via de novo pathway; UMP from orotate: step 2/2. In terms of biological role, catalyzes the decarboxylation of orotidine 5'-monophosphate (OMP) to uridine 5'-monophosphate (UMP). The sequence is that of Orotidine 5'-phosphate decarboxylase from Shigella dysenteriae serotype 1 (strain Sd197).